Here is a 302-residue protein sequence, read N- to C-terminus: Dermonecrotic toxin LiSicTox-alphaIA1bii (302 aa).

An N-terminal signal peptide occupies residues 1–14 (ARVVLGCWSVLSQA). The propeptide occupies 15 to 22 (AQTDDEER). Residue His34 is part of the active site. Mg(2+) is bound by residues Glu54 and Asp56. The active-site Nucleophile is the His70. 2 cysteine pairs are disulfide-bonded: Cys74–Cys80 and Cys76–Cys219. Asp114 contributes to the Mg(2+) binding site.

This sequence belongs to the arthropod phospholipase D family. Class II subfamily. Class IIa sub-subfamily. The cofactor is Mg(2+). As to expression, expressed by the venom gland.

The protein resides in the secreted. It carries out the reaction an N-(acyl)-sphingosylphosphocholine = an N-(acyl)-sphingosyl-1,3-cyclic phosphate + choline. The enzyme catalyses an N-(acyl)-sphingosylphosphoethanolamine = an N-(acyl)-sphingosyl-1,3-cyclic phosphate + ethanolamine. The catalysed reaction is a 1-acyl-sn-glycero-3-phosphocholine = a 1-acyl-sn-glycero-2,3-cyclic phosphate + choline. It catalyses the reaction a 1-acyl-sn-glycero-3-phosphoethanolamine = a 1-acyl-sn-glycero-2,3-cyclic phosphate + ethanolamine. Its function is as follows. Dermonecrotic toxins cleave the phosphodiester linkage between the phosphate and headgroup of certain phospholipids (sphingolipid and lysolipid substrates), forming an alcohol (often choline) and a cyclic phosphate. This toxin acts on sphingomyelin (SM). It may also act on ceramide phosphoethanolamine (CPE), lysophosphatidylcholine (LPC) and lysophosphatidylethanolamine (LPE), but not on lysophosphatidylserine (LPS), and lysophosphatidylglycerol (LPG). It acts by transphosphatidylation, releasing exclusively cyclic phosphate products as second products. Induces hemolysis, dermonecrosis, vascular permeability and platelet aggregation. The polypeptide is Dermonecrotic toxin LiSicTox-alphaIA1bii (Loxosceles intermedia (Brown spider)).